The sequence spans 224 residues: Heme response regulator HssR (224 aa).

The 114-residue stretch at 3-116 folds into the Response regulatory domain; the sequence is QCLVVDDDPR…ELIFRIRAVL (114 aa). Aspartate 52 is modified (4-aspartylphosphate). Residues 124–222 constitute a DNA-binding region (ompR/PhoB-type); it reads NSEMTIGNLT…VRGQGYKVEN (99 aa).

In terms of processing, phosphorylated by HssS.

It localises to the cytoplasm. Its function is as follows. Member of the two-component regulatory system HssS/HssR involved in intracellular heme homeostasis and tempering of staphylococcal virulence. Phosphorylated HssR binds to a direct repeat sequence within hrtAB promoter and activates the expression of hrtAB, an efflux pump, in response to extracellular heme, hemin, hemoglobin or blood. The sequence is that of Heme response regulator HssR (hssR) from Staphylococcus aureus (strain Mu50 / ATCC 700699).